Reading from the N-terminus, the 179-residue chain is Large ribosomal subunit protein uL5 (179 aa).

This sequence belongs to the universal ribosomal protein uL5 family. Part of the 50S ribosomal subunit; part of the 5S rRNA/L5/L18/L25 subcomplex. Contacts the 5S rRNA and the P site tRNA. Forms a bridge to the 30S subunit in the 70S ribosome.

Its function is as follows. This is one of the proteins that bind and probably mediate the attachment of the 5S RNA into the large ribosomal subunit, where it forms part of the central protuberance. In the 70S ribosome it contacts protein S13 of the 30S subunit (bridge B1b), connecting the 2 subunits; this bridge is implicated in subunit movement. Contacts the P site tRNA; the 5S rRNA and some of its associated proteins might help stabilize positioning of ribosome-bound tRNAs. The polypeptide is Large ribosomal subunit protein uL5 (Idiomarina loihiensis (strain ATCC BAA-735 / DSM 15497 / L2-TR)).